We begin with the raw amino-acid sequence, 133 residues long: MANHDPISDMLTRIRNASEKRHEKTKVPASRMSLSIAKVLQSEGFIAEINEEGEGFRKQLILGLKYTGKHRSPIIRSMQRVSKPGLRIYKNTRGLPKVLGGLGIAIISTSNGVMSDRDARKQGVGGEVLCYVC.

The interval 1–28 is disordered; that stretch reads MANHDPISDMLTRIRNASEKRHEKTKVP. A compositionally biased stretch (basic and acidic residues) spans 16–26; it reads NASEKRHEKTK.

Belongs to the universal ribosomal protein uS8 family. In terms of assembly, part of the 30S ribosomal subunit. Contacts proteins S5 and S12.

In terms of biological role, one of the primary rRNA binding proteins, it binds directly to 16S rRNA central domain where it helps coordinate assembly of the platform of the 30S subunit. This Prochlorococcus marinus (strain NATL2A) protein is Small ribosomal subunit protein uS8.